We begin with the raw amino-acid sequence, 232 residues long: Ribonuclease 3 (232 aa).

Residues A10–G135 enclose the RNase III domain. A Mg(2+)-binding site is contributed by E48. Residue D52 is part of the active site. N121 and E124 together coordinate Mg(2+). The active site involves E124. A DRBM domain is found at D161–E230.

It belongs to the ribonuclease III family. Homodimer. The cofactor is Mg(2+).

Its subcellular location is the cytoplasm. It carries out the reaction Endonucleolytic cleavage to 5'-phosphomonoester.. Digests double-stranded RNA. Involved in the processing of primary rRNA transcript to yield the immediate precursors to the large and small rRNAs (23S and 16S). Processes some mRNAs, and tRNAs when they are encoded in the rRNA operon. Processes pre-crRNA and tracrRNA of type II CRISPR loci if present in the organism. The sequence is that of Ribonuclease 3 from Anaplasma marginale (strain St. Maries).